We begin with the raw amino-acid sequence, 354 residues long: Protein-arginine kinase (354 aa).

In terms of domain architecture, Phosphagen kinase C-terminal spans 24 to 254 (IVLSSRIRLA…QQIIHQEKTA (231 aa)). ATP contacts are provided by residues 27-31 (SSRIR), His-92, Arg-125, 176-180 (RASVM), and 207-212 (RGIYGE). The RDXXRA motif of the pArg binding pocket involved in allosteric regulation motif lies at 337 to 342 (RDYRRA).

It belongs to the ATP:guanido phosphotransferase family.

It catalyses the reaction L-arginyl-[protein] + ATP = N(omega)-phospho-L-arginyl-[protein] + ADP + H(+). Appears to be allosterically activated by the binding of pArg-containing polypeptides to the pArg-binding pocket localized in the C-terminal domain of McsB. Catalyzes the specific phosphorylation of arginine residues in a large number of proteins. Is part of the bacterial stress response system. Protein arginine phosphorylation has a physiologically important role and is involved in the regulation of many critical cellular processes, such as protein homeostasis, motility, competence, and stringent and stress responses, by regulating gene expression and protein activity. This is Protein-arginine kinase from Bacillus mycoides (strain KBAB4) (Bacillus weihenstephanensis).